Here is a 72-residue protein sequence, read N- to C-terminus: Conotoxin VnMKLT2-021 (72 aa).

An N-terminal signal peptide occupies residues methionine 1–alanine 22. Positions alanine 23–threonine 45 are excised as a propeptide. 3 disulfide bridges follow: cysteine 48-cysteine 62, cysteine 55-cysteine 66, and cysteine 61-cysteine 71.

The protein belongs to the conotoxin O1 superfamily. In terms of tissue distribution, expressed by the venom duct.

The protein resides in the secreted. This chain is Conotoxin VnMKLT2-021, found in Conus ventricosus (Mediterranean cone).